The following is a 242-amino-acid chain: Probable transcriptional regulatory protein Bamb_2332 (242 aa).

The protein belongs to the TACO1 family.

It is found in the cytoplasm. This is Probable transcriptional regulatory protein Bamb_2332 from Burkholderia ambifaria (strain ATCC BAA-244 / DSM 16087 / CCUG 44356 / LMG 19182 / AMMD) (Burkholderia cepacia (strain AMMD)).